A 140-amino-acid chain; its full sequence is Nucleoside diphosphate kinase (140 aa).

The ATP site is built by Lys-11, Phe-59, Arg-87, Thr-93, Arg-104, and Asn-114. The active-site Pros-phosphohistidine intermediate is the His-117.

Belongs to the NDK family. In terms of assembly, homotetramer. Mg(2+) is required as a cofactor.

It localises to the cytoplasm. The catalysed reaction is a 2'-deoxyribonucleoside 5'-diphosphate + ATP = a 2'-deoxyribonucleoside 5'-triphosphate + ADP. It carries out the reaction a ribonucleoside 5'-diphosphate + ATP = a ribonucleoside 5'-triphosphate + ADP. In terms of biological role, major role in the synthesis of nucleoside triphosphates other than ATP. The ATP gamma phosphate is transferred to the NDP beta phosphate via a ping-pong mechanism, using a phosphorylated active-site intermediate. The protein is Nucleoside diphosphate kinase of Francisella tularensis subsp. holarctica (strain LVS).